The primary structure comprises 263 residues: MFRNQYDNDVTVWSPQGRIHQIEYAMEAVKQGSATVGLKSKTHAVLVALKRAQSELAAHRKKILHVDNHIGISIAGLTADARLLCNFMRQECLDSRFVFDRPLPVSRLVSLIGSKTQIPTQRYGRRPYGVGLLIAGYDDMGPHIFQTCPSANYFDCRAMSIGARSQSARTYLERHMSEFMECNLNELVKHGLRALRETLPAEQDLTTKNVSIGIVGKDLEFTIYDDDDVSPFLEGLEERPQRKAQPAQPADEPAEKADEPMEH.

Methionine 1 is subject to N-acetylmethionine. The residue at position 110 (serine 110) is a Phosphoserine; alternate. O-linked (GlcNAc) serine; alternate glycosylation is present at serine 110. A Glycyl lysine isopeptide (Lys-Gly) (interchain with G-Cter in ubiquitin) cross-link involves residue lysine 115. Serine 177 carries the phosphoserine modification. Lysine 208 is covalently cross-linked (Glycyl lysine isopeptide (Lys-Gly) (interchain with G-Cter in ubiquitin)). The interval 232–263 is disordered; it reads FLEGLEERPQRKAQPAQPADEPAEKADEPMEH. Residues 253 to 263 show a composition bias toward basic and acidic residues; it reads PAEKADEPMEH.

This sequence belongs to the peptidase T1A family. The 26S proteasome consists of a 20S proteasome core and two 19S regulatory subunits. The 20S proteasome core is a barrel-shaped complex made of 28 subunits that are arranged in four stacked rings. The two outer rings are each formed by seven alpha subunits, and the two inner rings are formed by seven beta subunits. The proteolytic activity is exerted by three beta-subunits PSMB5, PSMB6 and PSMB7. Interacts with NOTCH3. Interacts with ZFAND1.

The protein resides in the cytoplasm. Its subcellular location is the nucleus. Functionally, component of the 20S core proteasome complex involved in the proteolytic degradation of most intracellular proteins. This complex plays numerous essential roles within the cell by associating with different regulatory particles. Associated with two 19S regulatory particles, forms the 26S proteasome and thus participates in the ATP-dependent degradation of ubiquitinated proteins. The 26S proteasome plays a key role in the maintenance of protein homeostasis by removing misfolded or damaged proteins that could impair cellular functions, and by removing proteins whose functions are no longer required. Associated with the PA200 or PA28, the 20S proteasome mediates ubiquitin-independent protein degradation. This type of proteolysis is required in several pathways including spermatogenesis (20S-PA200 complex) or generation of a subset of MHC class I-presented antigenic peptides (20S-PA28 complex). The protein is Proteasome subunit alpha type-1 (PSMA1) of Macaca fascicularis (Crab-eating macaque).